The chain runs to 190 residues: Crossover junction endodeoxyribonuclease RuvC (190 aa).

Active-site residues include Asp8, Glu67, and Asp139. Residues Asp8, Glu67, and Asp139 each coordinate Mg(2+).

The protein belongs to the RuvC family. As to quaternary structure, homodimer which binds Holliday junction (HJ) DNA. The HJ becomes 2-fold symmetrical on binding to RuvC with unstacked arms; it has a different conformation from HJ DNA in complex with RuvA. In the full resolvosome a probable DNA-RuvA(4)-RuvB(12)-RuvC(2) complex forms which resolves the HJ. Requires Mg(2+) as cofactor.

It is found in the cytoplasm. The enzyme catalyses Endonucleolytic cleavage at a junction such as a reciprocal single-stranded crossover between two homologous DNA duplexes (Holliday junction).. Its function is as follows. The RuvA-RuvB-RuvC complex processes Holliday junction (HJ) DNA during genetic recombination and DNA repair. Endonuclease that resolves HJ intermediates. Cleaves cruciform DNA by making single-stranded nicks across the HJ at symmetrical positions within the homologous arms, yielding a 5'-phosphate and a 3'-hydroxyl group; requires a central core of homology in the junction. The consensus cleavage sequence is 5'-(A/T)TT(C/G)-3'. Cleavage occurs on the 3'-side of the TT dinucleotide at the point of strand exchange. HJ branch migration catalyzed by RuvA-RuvB allows RuvC to scan DNA until it finds its consensus sequence, where it cleaves and resolves the cruciform DNA. The polypeptide is Crossover junction endodeoxyribonuclease RuvC (Haemophilus influenzae (strain PittEE)).